A 139-amino-acid polypeptide reads, in one-letter code: D-ribose pyranase (139 aa).

The active-site Proton donor is His20. Residues Asp28, His106, and 128–130 contribute to the substrate site; that span reads YAN.

This sequence belongs to the RbsD / FucU family. RbsD subfamily. Homodecamer.

The protein localises to the cytoplasm. The catalysed reaction is beta-D-ribopyranose = beta-D-ribofuranose. It functions in the pathway carbohydrate metabolism; D-ribose degradation; D-ribose 5-phosphate from beta-D-ribopyranose: step 1/2. Functionally, catalyzes the interconversion of beta-pyran and beta-furan forms of D-ribose. This Haemophilus influenzae (strain 86-028NP) protein is D-ribose pyranase.